The primary structure comprises 457 residues: Reticulon-like protein B18 (457 aa).

The disordered stretch occupies residues 94 to 183 (AAVTARRSKT…SPSSDQPQDV (90 aa)). The segment covering 124 to 136 (LRSEAMVDTKENT) has biased composition (basic and acidic residues). The segment covering 149–163 (NQRKQKKLGRSKKEK) has biased composition (basic residues). Residues 166-183 (SVPLLASPSPSSDQPQDV) are compositionally biased toward low complexity. Positions 195 to 385 (ISDLIMWRDV…AFWNLTSLKT (191 aa)) constitute a Reticulon domain. Helical transmembrane passes span 208–228 (TLWF…AKGF), 230–250 (FSVF…SFLS), 314–334 (YGYL…SFTI), and 377–397 (FWNL…VVVI). Positions 407–457 (DSEDEEEKKQQEKTHPEQQKSPEDKSTSPRSAEEEQALVLVAETKAPKKLY) are disordered. Residues 413 to 439 (EKKQQEKTHPEQQKSPEDKSTSPRSAE) show a composition bias toward basic and acidic residues.

Its subcellular location is the endoplasmic reticulum membrane. The chain is Reticulon-like protein B18 (RTNLB18) from Arabidopsis thaliana (Mouse-ear cress).